Consider the following 79-residue polypeptide: Acyl carrier protein (79 aa).

The 76-residue stretch at 2-77 folds into the Carrier domain; the sequence is STIEERVKKI…QAIDYVKSHV (76 aa). At serine 37 the chain carries O-(pantetheine 4'-phosphoryl)serine.

This sequence belongs to the acyl carrier protein (ACP) family. In terms of processing, 4'-phosphopantetheine is transferred from CoA to a specific serine of apo-ACP by AcpS. This modification is essential for activity because fatty acids are bound in thioester linkage to the sulfhydryl of the prosthetic group.

Its subcellular location is the cytoplasm. The protein operates within lipid metabolism; fatty acid biosynthesis. Functionally, carrier of the growing fatty acid chain in fatty acid biosynthesis. This chain is Acyl carrier protein, found in Xanthomonas oryzae pv. oryzae (strain MAFF 311018).